A 510-amino-acid chain; its full sequence is 2,3-bisphosphoglycerate-independent phosphoglycerate mutase (510 aa).

Residues Asp16 and Ser66 each contribute to the Mn(2+) site. Residue Ser66 is the Phosphoserine intermediate of the active site. Substrate is bound by residues His127, 156 to 157, Arg186, Arg192, 257 to 260, and Lys333; these read RD and RADR. Mn(2+) is bound by residues Asp400, His404, Asp441, His442, and His460.

This sequence belongs to the BPG-independent phosphoglycerate mutase family. As to quaternary structure, monomer. Requires Mn(2+) as cofactor.

It catalyses the reaction (2R)-2-phosphoglycerate = (2R)-3-phosphoglycerate. It functions in the pathway carbohydrate degradation; glycolysis; pyruvate from D-glyceraldehyde 3-phosphate: step 3/5. Functionally, catalyzes the interconversion of 2-phosphoglycerate and 3-phosphoglycerate. The polypeptide is 2,3-bisphosphoglycerate-independent phosphoglycerate mutase (Gluconobacter oxydans (strain 621H) (Gluconobacter suboxydans)).